A 1390-amino-acid polypeptide reads, in one-letter code: Hepatocyte growth factor receptor (1390 aa).

Positions 1–24 (MKAPAVLAPGILVLLFTLVQRSNG) are cleaved as a signal peptide. The Extracellular segment spans residues 25–932 (ECKEALAKSE…VIVQPDQNFT (908 aa)). The region spanning 27-515 (KEALAKSEMN…TGKKITKIPL (489 aa)) is the Sema domain. The N-linked (GlcNAc...) asparagine glycan is linked to asparagine 45. Disulfide bonds link cysteine 95-cysteine 101, cysteine 98-cysteine 160, cysteine 133-cysteine 141, and cysteine 172-cysteine 175. Asparagine 106 carries N-linked (GlcNAc...) asparagine glycosylation. A glycan (N-linked (GlcNAc...) asparagine) is linked at asparagine 149. Asparagine 202 carries an N-linked (GlcNAc...) asparagine glycan. 2 cysteine pairs are disulfide-bonded: cysteine 298–cysteine 363 and cysteine 385–cysteine 397. 2 N-linked (GlcNAc...) asparagine glycosylation sites follow: asparagine 399 and asparagine 405. Intrachain disulfides connect cysteine 520/cysteine 538, cysteine 526/cysteine 561, cysteine 529/cysteine 545, and cysteine 541/cysteine 551. IPT/TIG domains lie at 563–655 (PAIY…FSYV), 657–739 (PVIT…FSYR), and 742–836 (PIVY…LIYV). An O-linked (Man) threonine glycan is attached at threonine 582. N-linked (GlcNAc...) asparagine glycosylation is found at asparagine 607 and asparagine 635. Residues threonine 676 and threonine 761 are each glycosylated (O-linked (Man) threonine). N-linked (GlcNAc...) asparagine glycosylation is found at asparagine 785, asparagine 879, and asparagine 930. A helical membrane pass occupies residues 933–955 (GLIAGVVSISIALLLLLGFFLWL). Residues 956-1390 (KKRKQIKDLG…TRPASFWETS (435 aa)) lie on the Cytoplasmic side of the membrane. Residue serine 966 is modified to Phosphoserine. Threonine 977 carries the phosphothreonine modification. A phosphoserine mark is found at serine 990, serine 997, and serine 1000. Residue tyrosine 1003 is modified to Phosphotyrosine. The 268-residue stretch at 1078-1345 (VHFNEVIGRG…RISAIFSTFI (268 aa)) folds into the Protein kinase domain. ATP is bound by residues 1084–1092 (IGRGHFGCV) and lysine 1110. Aspartate 1204 functions as the Proton acceptor in the catalytic mechanism. The segment at 1212–1390 (LDEKFTVKVA…TRPASFWETS (179 aa)) is interaction with RANBP9. A Phosphotyrosine modification is found at tyrosine 1230. Phosphotyrosine; by autocatalysis is present on residues tyrosine 1234 and tyrosine 1235. Threonine 1289 carries the phosphothreonine modification. The interaction with MUC20 stretch occupies residues 1320-1359 (WHPKAEMRPSFSELVSRISAIFSTFIGEHYVHVNATYVNV). Phosphotyrosine; by autocatalysis is present on residues tyrosine 1349 and tyrosine 1356. At tyrosine 1365 the chain carries Phosphotyrosine.

The protein belongs to the protein kinase superfamily. Tyr protein kinase family. In terms of assembly, heterodimer made of an alpha chain (50 kDa) and a beta chain (145 kDa) which are disulfide linked. Binds PLXNB1. Interacts when phosphorylated with downstream effectors including STAT3, PIK3R1, SRC, PCLG1, GRB2 and GAB1. Interacts with SPSB1, SPSB2 and SPSB4. Interacts with INPP5D/SHIP1. When phosphorylated at Tyr-1356, interacts with INPPL1/SHIP2. Interacts with RANBP9 and RANBP10, as well as SPSB1, SPSB2, SPSB3 and SPSB4. SPSB1 binding occurs in the presence and in the absence of HGF, however HGF treatment has a positive effect on this interaction. Interacts with MUC20; prevents interaction with GRB2 and suppresses hepatocyte growth factor-induced cell proliferation. Interacts with GRB10. Interacts with PTPN1 and PTPN2. Interacts with HSP90AA1 and HSP90AB1; the interaction suppresses MET kinase activity. Interacts with tensin TNS3. Interacts (when phosphorylated) with tensin TNS4 (via SH2 domain); the interaction increases MET protein stability by inhibiting MET endocytosis and subsequent lysosomal degradation. In terms of processing, autophosphorylated in response to ligand binding on Tyr-1234 and Tyr-1235 in the kinase domain leading to further phosphorylation of Tyr-1349 and Tyr-1356 in the C-terminal multifunctional docking site. Dephosphorylated by PTPRJ at Tyr-1349 and Tyr-1365. Dephosphorylated by PTPN1 and PTPN2. Ubiquitinated. Ubiquitination by CBL regulates the receptor stability and activity through proteasomal degradation. Post-translationally, O-mannosylation of IPT/TIG domains by TMEM260 is required for protein maturation. O-mannosylated residues are composed of single mannose glycans that are not elongated or modified.

The protein resides in the membrane. The enzyme catalyses L-tyrosyl-[protein] + ATP = O-phospho-L-tyrosyl-[protein] + ADP + H(+). Its activity is regulated as follows. In its inactive state, the C-terminal tail interacts with the catalytic domain and inhibits the kinase activity. Upon ligand binding, the C-terminal tail is displaced and becomes phosphorylated, thus increasing the kinase activity. Functionally, receptor tyrosine kinase that transduces signals from the extracellular matrix into the cytoplasm by binding to hepatocyte growth factor/HGF ligand. Regulates many physiological processes including proliferation, scattering, morphogenesis and survival. Ligand binding at the cell surface induces autophosphorylation of MET on its intracellular domain that provides docking sites for downstream signaling molecules. Following activation by ligand, interacts with the PI3-kinase subunit PIK3R1, PLCG1, SRC, GRB2, STAT3 or the adapter GAB1. Recruitment of these downstream effectors by MET leads to the activation of several signaling cascades including the RAS-ERK, PI3 kinase-AKT, or PLCgamma-PKC. The RAS-ERK activation is associated with the morphogenetic effects while PI3K/AKT coordinates prosurvival effects. During embryonic development, MET signaling plays a role in gastrulation, development and migration of muscles and neuronal precursors, angiogenesis and kidney formation. In adults, participates in wound healing as well as organ regeneration and tissue remodeling. Also promotes differentiation and proliferation of hematopoietic cells. The polypeptide is Hepatocyte growth factor receptor (MET) (Pongo abelii (Sumatran orangutan)).